A 248-amino-acid polypeptide reads, in one-letter code: 2,3-bisphosphoglycerate-dependent phosphoglycerate mutase (248 aa).

Substrate contacts are provided by residues 8-15 (RHGESTWN), 21-22 (TG), Arg60, 87-90 (ERHY), Lys98, and 114-115 (RR). His9 (tele-phosphohistidine intermediate) is an active-site residue. Residue Glu87 is the Proton donor/acceptor of the active site. The disordered stretch occupies residues 117 to 137 (YDTPPPALEPTDPRASYDDPR). Positions 127-137 (TDPRASYDDPR) are enriched in basic and acidic residues. 183–184 (GN) provides a ligand contact to substrate.

Belongs to the phosphoglycerate mutase family. BPG-dependent PGAM subfamily. Homodimer.

The catalysed reaction is (2R)-2-phosphoglycerate = (2R)-3-phosphoglycerate. The protein operates within carbohydrate degradation; glycolysis; pyruvate from D-glyceraldehyde 3-phosphate: step 3/5. Catalyzes the interconversion of 2-phosphoglycerate and 3-phosphoglycerate. The polypeptide is 2,3-bisphosphoglycerate-dependent phosphoglycerate mutase (Cupriavidus taiwanensis (strain DSM 17343 / BCRC 17206 / CCUG 44338 / CIP 107171 / LMG 19424 / R1) (Ralstonia taiwanensis (strain LMG 19424))).